The primary structure comprises 42 residues: Photosystem II reaction center protein J (42 aa).

The helical transmembrane segment at 10–30 threads the bilayer; it reads IPLWFIGVIAGIAALSIVGLF.

The protein belongs to the PsbJ family. In terms of assembly, PSII is composed of 1 copy each of membrane proteins PsbA, PsbB, PsbC, PsbD, PsbE, PsbF, PsbH, PsbI, PsbJ, PsbK, PsbL, PsbM, PsbT, PsbX, PsbY, PsbZ, Psb30/Ycf12, at least 3 peripheral proteins of the oxygen-evolving complex and a large number of cofactors. It forms dimeric complexes.

The protein localises to the plastid. Its subcellular location is the chloroplast thylakoid membrane. Its function is as follows. One of the components of the core complex of photosystem II (PSII). PSII is a light-driven water:plastoquinone oxidoreductase that uses light energy to abstract electrons from H(2)O, generating O(2) and a proton gradient subsequently used for ATP formation. It consists of a core antenna complex that captures photons, and an electron transfer chain that converts photonic excitation into a charge separation. The chain is Photosystem II reaction center protein J from Zygnema circumcarinatum (Green alga).